The primary structure comprises 76 residues: MLILSRKEEESIVIGDEIVIKVVSIDKGSVKLGFEAPPHMLILREELKKAVADENLKASAQSDEIALTSLSQKLKK.

Belongs to the CsrA/RsmA family. In terms of assembly, homodimer; the beta-strands of each monomer intercalate to form a hydrophobic core, while the alpha-helices form wings that extend away from the core.

The protein resides in the cytoplasm. A translational regulator that binds mRNA to regulate translation initiation and/or mRNA stability. Usually binds in the 5'-UTR at or near the Shine-Dalgarno sequence preventing ribosome-binding, thus repressing translation. Its main target seems to be the major flagellin gene, while its function is anatagonized by FliW. The polypeptide is Translational regulator CsrA (Wolinella succinogenes (strain ATCC 29543 / DSM 1740 / CCUG 13145 / JCM 31913 / LMG 7466 / NCTC 11488 / FDC 602W) (Vibrio succinogenes)).